Consider the following 314-residue polypeptide: MSSSFKFNYNMGDSRILVVINQRCLALPSMMSADGTCCNGDENRVIDTFSKLGFQDFVYRNMTTADLKDIVTLLTRHNHRTYSCVVVVILTDGAAVGEIKTADGSYKLRDFMTLFDVDKLRDKPKMFVVQTNRGAKIRRNHCKHASCQCLMYSSSERGGLRRIYSVIGWLCKVFGRSSSSPQFASQQLACLNYTLPVRETIVIYSYVDAFVLYGDTDVGSPVIYELCTALDKFGKSCNILTAITMMQHKVAKYVPAALPVVHMNCTRLMHYGDAPNDVTPSKATITTMIDGCSVILEEEGELSDDDGELRTASK.

It belongs to the peptidase C14A family.

Functionally, may be involved in viral replication. This Heliothis virescens ascovirus 3e (HvAV-3e) protein is Caspase-like protein.